The primary structure comprises 461 residues: TWiK family of potassium channels protein 18 (461 aa).

The Cytoplasmic portion of the chain corresponds to 1-21 (MAIVAQGVSTILTTFQKTFKG). The chain crosses the membrane as a helical span at residues 22–42 (LLPLIILVAYTLLGAWIFWMI). Asn-88 carries an N-linked (GlcNAc...) asparagine glycan. Residues 116-136 (FLGSIFYCMTVYTTIGYGNIV) constitute an intramembrane region (pore-forming). A helical membrane pass occupies residues 144–164 (FATILYAFIGIPLTVLSLYCL). The Cytoplasmic segment spans residues 165 to 224 (GSLFAKGCKMLWRFFLKSTRVVSKDLSNKISEAADNIEEGTTAITPSAEKTENNDDDLLS). A helical membrane pass occupies residues 225 to 245 (FPISGLLLITVIWVIFCAVLF). The segment at residues 253–273 (FGTSLYFTLISFTTIGFGDIL) is an intramembrane region (pore-forming). A helical transmembrane segment spans residues 281–301 (PIVGVLLLIGLSLVSTVMTLI). Residues 302-461 (QQQIEALASG…GNEDYLEHDI (160 aa)) lie on the Cytoplasmic side of the membrane. The tract at residues 328-347 (REDGEVDEHVDPEEDPENNK) is disordered.

Belongs to the two pore domain potassium channel (TC 1.A.1.8) family. As to expression, expressed in body wall muscle.

Its subcellular location is the membrane. Its function is as follows. Outwardly rectifying potassium channel protein; activity is sharply augmented by increase in temperature. The chain is TWiK family of potassium channels protein 18 (twk-18) from Caenorhabditis elegans.